We begin with the raw amino-acid sequence, 466 residues long: MNIKTRFAPSPTGDLHVGSVRTALYSWLFARKNGGEFILRIEDTDIERSTQQAINAIIDSMKWLKIDWDQGPYFQTQNLDRYKEVINQLLKNGSAYKCYCSKKRLEELRNHQIINGKKPRYDGYCRNFDQTKIKNQPCVVRFRNPQQGYVIFNDLIRGKIKYNNQELDDLIICRTEGIPTYNFCVIIDDLDMKITHVIRGEDHLNNTPRQINILKAIGARVPEYAHLSMIIGHDGKKLSKRHSAVGVMQYRDQGFLPEALLNYLLRLGWSYGNQEIFSLDEMKKLFSLNTVKKSASLFDQQKLLWYNHFYIKTLSTDYIAQHLLFHLKQMGINPYMGPALADIVTLFRTRCKTIKDMASSCLYFYKDFEQFDHQAAIVYLKPVATKKLQTVQAKLTNQTNWTLESIQDILQQTAHELKVSMEAISMPLRVAVTGTSQSPAIDRIIHVIGKSRSLKRIDMALKYINI.

A 'HIGH' region motif is present at residues 9-19 (PSPTGDLHVGS). The short motif at 237-241 (KLSKR) is the 'KMSKS' region element. Lys-240 serves as a coordination point for ATP.

It belongs to the class-I aminoacyl-tRNA synthetase family. Glutamate--tRNA ligase type 1 subfamily. As to quaternary structure, monomer.

The protein localises to the cytoplasm. It catalyses the reaction tRNA(Glu) + L-glutamate + ATP = L-glutamyl-tRNA(Glu) + AMP + diphosphate. Functionally, catalyzes the attachment of glutamate to tRNA(Glu) in a two-step reaction: glutamate is first activated by ATP to form Glu-AMP and then transferred to the acceptor end of tRNA(Glu). The sequence is that of Glutamate--tRNA ligase from Baumannia cicadellinicola subsp. Homalodisca coagulata.